The following is a 450-amino-acid chain: Phosphoglucosamine mutase (450 aa).

S101 serves as the catalytic Phosphoserine intermediate. 4 residues coordinate Mg(2+): S101, D240, D242, and D244. S101 is subject to Phosphoserine.

This sequence belongs to the phosphohexose mutase family. Mg(2+) is required as a cofactor. Post-translationally, activated by phosphorylation.

It catalyses the reaction alpha-D-glucosamine 1-phosphate = D-glucosamine 6-phosphate. Functionally, catalyzes the conversion of glucosamine-6-phosphate to glucosamine-1-phosphate. This chain is Phosphoglucosamine mutase, found in Streptococcus thermophilus (strain ATCC BAA-250 / LMG 18311).